We begin with the raw amino-acid sequence, 114 residues long: Lymphotactin (114 aa).

Positions 1–21 (MRLLILALLGICSLTAYIVEG) are cleaved as a signal peptide. An intrachain disulfide couples Cys-32 to Cys-69. A disordered region spans residues 91 to 114 (RNNMIQTKPTGTQQSTNTAVTLTG).

The protein belongs to the intercrine gamma family. In terms of tissue distribution, highest level in spleen, lower in peripheral leukocytes and very low levels in lung, colon and small intestine.

The protein localises to the secreted. Chemotactic activity for lymphocytes but not for monocytes or neutrophils. In thymus, mediates medullary accumulation of thymic dendritic cells and contributes to regulatoy T cell development, playing a role in self-tolerance establishment. The chain is Lymphotactin (XCL1) from Homo sapiens (Human).